A 155-amino-acid chain; its full sequence is Probable Brix domain-containing ribosomal biogenesis protein (155 aa).

Residues 1–155 (MLLTTSRKPS…LLIRDFRVGE (155 aa)) form the Brix domain.

Functionally, probably involved in the biogenesis of the ribosome. The polypeptide is Probable Brix domain-containing ribosomal biogenesis protein (Methanothermobacter thermautotrophicus (strain ATCC 29096 / DSM 1053 / JCM 10044 / NBRC 100330 / Delta H) (Methanobacterium thermoautotrophicum)).